Consider the following 316-residue polypeptide: 4-hydroxy-3-methylbut-2-enyl diphosphate reductase (316 aa).

Residue Cys12 participates in [4Fe-4S] cluster binding. (2E)-4-hydroxy-3-methylbut-2-enyl diphosphate is bound by residues His41 and His74. Residues His41 and His74 each coordinate dimethylallyl diphosphate. Residues His41 and His74 each coordinate isopentenyl diphosphate. Residue Cys96 coordinates [4Fe-4S] cluster. His124 is a (2E)-4-hydroxy-3-methylbut-2-enyl diphosphate binding site. His124 contacts dimethylallyl diphosphate. Residue His124 participates in isopentenyl diphosphate binding. The active-site Proton donor is Glu126. Thr168 is a (2E)-4-hydroxy-3-methylbut-2-enyl diphosphate binding site. Position 198 (Cys198) interacts with [4Fe-4S] cluster. Positions 226, 227, 228, and 270 each coordinate (2E)-4-hydroxy-3-methylbut-2-enyl diphosphate. Dimethylallyl diphosphate contacts are provided by Ser226, Ser227, Asn228, and Ser270. Isopentenyl diphosphate contacts are provided by Ser226, Ser227, Asn228, and Ser270.

The protein belongs to the IspH family. [4Fe-4S] cluster is required as a cofactor.

It carries out the reaction isopentenyl diphosphate + 2 oxidized [2Fe-2S]-[ferredoxin] + H2O = (2E)-4-hydroxy-3-methylbut-2-enyl diphosphate + 2 reduced [2Fe-2S]-[ferredoxin] + 2 H(+). It catalyses the reaction dimethylallyl diphosphate + 2 oxidized [2Fe-2S]-[ferredoxin] + H2O = (2E)-4-hydroxy-3-methylbut-2-enyl diphosphate + 2 reduced [2Fe-2S]-[ferredoxin] + 2 H(+). Its pathway is isoprenoid biosynthesis; dimethylallyl diphosphate biosynthesis; dimethylallyl diphosphate from (2E)-4-hydroxy-3-methylbutenyl diphosphate: step 1/1. It participates in isoprenoid biosynthesis; isopentenyl diphosphate biosynthesis via DXP pathway; isopentenyl diphosphate from 1-deoxy-D-xylulose 5-phosphate: step 6/6. Its function is as follows. Catalyzes the conversion of 1-hydroxy-2-methyl-2-(E)-butenyl 4-diphosphate (HMBPP) into a mixture of isopentenyl diphosphate (IPP) and dimethylallyl diphosphate (DMAPP). Acts in the terminal step of the DOXP/MEP pathway for isoprenoid precursor biosynthesis. This is 4-hydroxy-3-methylbut-2-enyl diphosphate reductase from Acinetobacter baylyi (strain ATCC 33305 / BD413 / ADP1).